A 186-amino-acid polypeptide reads, in one-letter code: UPF0301 protein Daro_3893 (186 aa).

Belongs to the UPF0301 (AlgH) family.

This is UPF0301 protein Daro_3893 from Dechloromonas aromatica (strain RCB).